Consider the following 159-residue polypeptide: Putative pre-16S rRNA nuclease (159 aa).

This sequence belongs to the YqgF nuclease family.

The protein resides in the cytoplasm. In terms of biological role, could be a nuclease involved in processing of the 5'-end of pre-16S rRNA. This chain is Putative pre-16S rRNA nuclease, found in Bartonella quintana (strain Toulouse) (Rochalimaea quintana).